The following is a 1032-amino-acid chain: Integrin alpha-4 (1032 aa).

The N-terminal stretch at 1-34 (MIRDLGKVGKVSLLLDHIWTGILLYTVILTPADC) is a signal peptide. Residues 35–974 (YNIDESSPML…LHNLKPKKHV (940 aa)) lie on the Extracellular side of the membrane. FG-GAP repeat units lie at residues 36-100 (NIDE…PNRT), 113-177 (KCGK…TELS), 186-237 (DHVR…TIKS), 238-291 (YVDL…EKQL), 292-351 (TILF…GAME), 353-411 (LKFE…GITP), and 415-477 (QRLQ…LPST). N-linked (GlcNAc...) asparagine glycans are attached at residues Asn81 and Asn98. 3 disulfide bridges follow: Cys91-Cys101, Cys144-Cys165, and Cys183-Cys198. Residue Asn229 is glycosylated (N-linked (GlcNAc...) asparagine). Residues Asp314, Asn316, Asp318, Leu320, Asp322, Asp376, Asp378, Asp380, Asp384, Asp438, Asp440, Asn442, Tyr444, and Asp446 each coordinate Ca(2+). Asn479 carries N-linked (GlcNAc...) asparagine glycosylation. Cys485 and Cys494 form a disulfide bridge. N-linked (GlcNAc...) asparagine glycans are attached at residues Asn496, Asn517, Asn537, Asn626, and Asn660. 2 cysteine pairs are disulfide-bonded: Cys500/Cys556 and Cys622/Cys627. Cys698 and Cys712 are oxidised to a cystine. 2 N-linked (GlcNAc...) asparagine glycosylation sites follow: Asn746 and Asn857. Disulfide bonds link Cys853-Cys889 and Cys896-Cys901. The chain crosses the membrane as a helical span at residues 975–998 (IYMIIGISLLLGILLFSLLTYILW). Over 999-1032 (KVGFFRRKYQPIGTEETSRRESWNYLNKDEKEVK) the chain is Cytoplasmic. Positions 1001-1005 (GFFRR) match the GFFKR motif motif.

It belongs to the integrin alpha chain family. Heterodimer of an alpha and a beta subunit.

Its subcellular location is the membrane. Fibronectin and V-CAM adhesion receptor. The chain is Integrin alpha-4 (itga4) from Xenopus laevis (African clawed frog).